The sequence spans 374 residues: Ribosomal RNA large subunit methyltransferase G (374 aa).

The protein belongs to the methyltransferase superfamily. RlmG family.

The protein localises to the cytoplasm. It carries out the reaction guanosine(1835) in 23S rRNA + S-adenosyl-L-methionine = N(2)-methylguanosine(1835) in 23S rRNA + S-adenosyl-L-homocysteine + H(+). Functionally, specifically methylates the guanine in position 1835 (m2G1835) of 23S rRNA. This Pseudomonas putida (strain W619) protein is Ribosomal RNA large subunit methyltransferase G.